We begin with the raw amino-acid sequence, 635 residues long: Threonine--tRNA ligase (635 aa).

Positions 1-61 (MIVITLPDGS…EGDARLAIVT (61 aa)) constitute a TGS domain. A catalytic region spans residues 242-533 (DHRKLGRELD…LIEQHAGALP (292 aa)). The Zn(2+) site is built by Cys333, His384, and His510.

The protein belongs to the class-II aminoacyl-tRNA synthetase family. As to quaternary structure, homodimer. Zn(2+) is required as a cofactor.

It localises to the cytoplasm. It catalyses the reaction tRNA(Thr) + L-threonine + ATP = L-threonyl-tRNA(Thr) + AMP + diphosphate + H(+). Its function is as follows. Catalyzes the attachment of threonine to tRNA(Thr) in a two-step reaction: L-threonine is first activated by ATP to form Thr-AMP and then transferred to the acceptor end of tRNA(Thr). Also edits incorrectly charged L-seryl-tRNA(Thr). The chain is Threonine--tRNA ligase from Methylibium petroleiphilum (strain ATCC BAA-1232 / LMG 22953 / PM1).